Consider the following 1064-residue polypeptide: Ribosome quality control complex subunit NEMF (1064 aa).

A Phosphothreonine modification is found at Thr-7. Positions 296–359 (VDEFYSKIEG…LIEMNLQIVD (64 aa)) form a coiled coil. Ser-417 is modified (phosphoserine). The interval 420 to 451 (EDGDGDASIENSDAEAPKGKKKKQKNKQLQKP) is disordered. Residues 438–447 (GKKKKQKNKQ) show a composition bias toward basic residues. Positions 481–512 (AAKKTQRTVEAAEKAFKSAEKKTKQTLKEVQT) form a coiled coil. Over residues 694–707 (EQLEGGDSSEEETE) the composition is skewed to acidic residues. 2 disordered regions span residues 694-718 (EQLE…DVEL) and 731-973 (SGRD…SLTG). Residues 731–756 (SGRDELSSEDGEAKAVTKDQEPIGEM) are compositionally biased toward basic and acidic residues. Residue Ser-737 is modified to Phosphoserine. Over residues 771–781 (IDLSHLQSQRP) the composition is skewed to polar residues. Residues 828–839 (IEEKDKERESAV) show a composition bias toward basic and acidic residues. Residues 858–882 (KRGQKSKMKKMKEKYKDQDDEDREL) are a coiled coil. Basic residues predominate over residues 859-870 (RGQKSKMKKMKE). Over residues 947–959 (DDPHDDKEEHDLD) the composition is skewed to basic and acidic residues. Polar residues predominate over residues 960–973 (QQGNEENLFDSLTG).

The protein belongs to the NEMF family. Component of the ribosome quality control complex (RQC), composed of the E3 ubiquitin ligase LTN1, TCF25 and NEMF associated with the 60S ribosomal subunit. The complex probably also contains VCP/p97 and its ubiquitin-binding cofactors. Interacts (via its N-terminus) with XPO1.

The protein resides in the cytoplasm. It is found in the cytosol. The protein localises to the nucleus. Key component of the ribosome quality control complex (RQC), a ribosome-associated complex that mediates the extraction of incompletely synthesized nascent chains from stalled ribosomes as well as their ubiquitin-mediated proteasomal degradation. Thereby, frees 60S subunit ribosomes from the stalled translation complex and prevents the accumulation of nascent polypeptide chains that are potentially toxic for the cell. Within the RQC complex, NEMF specifically binds stalled 60S ribosomal subunits by recognizing an exposed, nascent chain-conjugated tRNA moiety and promotes the recruitment of LTN1 to stalled 60S subunits. Following binding to stalled 60S ribosomal subunits, NEMF mediates CAT tailing by recruiting alanine-charged tRNA to the A-site and directing the elongation of stalled nascent chains independently of mRNA or 40S subunits, leading to non-templated C-terminal alanine extensions (CAT tails). Mainly recruits alanine-charged tRNAs, but can also other amino acid-charged tRNAs. CAT tailing is required to promote ubiquitination of stalled nascent chains by different E3 ubiquitin-protein ligases. In the canonical RQC pathway (RQC-L), CAT tailing facilitates LTN1-dependent ubiquitination by exposing lysine residues that would otherwise remain buried in the ribosomal exit tunnel. In the alternative RQC pathway (RQC-C) CAT tailing creates an C-degron mainly composed of alanine that is recognized by the CRL2(KLHDC10) and RCHY1/PIRH2 E3 ligases, leading to ubiquitination and degradation of stalled nascent chains. NEMF may also indirectly play a role in nuclear export. The polypeptide is Ribosome quality control complex subunit NEMF (Mus musculus (Mouse)).